A 156-amino-acid chain; its full sequence is MGRSRSRSPERRRERRRSRSASRERERRRRERSRSRERRRSRSRSPHRRRSRSPRRHRSSSISPGRLKDRRDDDKKDSKESKGAKERQIAAEDLEGKTEEEIEMMKMMGFATFDTSKGKKVDGSVNAYAINVSQKRKYRQYMNRKGGFNRPLDFIA.

The interval 1–98 is disordered; that stretch reads MGRSRSRSPE…IAAEDLEGKT (98 aa). Residues 13-59 are compositionally biased toward basic residues; sequence RERRRSRSASRERERRRRERSRSRERRRSRSRSPHRRRSRSPRRHRS. The span at 66–98 shows a compositional bias: basic and acidic residues; it reads RLKDRRDDDKKDSKESKGAKERQIAAEDLEGKT.

This sequence belongs to the SNUT3 family. As to quaternary structure, part of a tri-snRNP complex.

It is found in the nucleus. In terms of biological role, may play a role in mRNA splicing. This is U4/U6.U5 small nuclear ribonucleoprotein 27 kDa protein (snrnp27) from Xenopus tropicalis (Western clawed frog).